Consider the following 292-residue polypeptide: Cytidine deaminase (292 aa).

CMP/dCMP-type deaminase domains lie at 47 to 167 (TPLK…FGPK) and 186 to 292 (DHQD…YYSL). Residue 88–90 (NQE) coordinates substrate. Residue His-101 participates in Zn(2+) binding. Glu-103 serves as the catalytic Proton donor. Cys-128 and Cys-131 together coordinate Zn(2+).

It belongs to the cytidine and deoxycytidylate deaminase family. In terms of assembly, homodimer. Zn(2+) is required as a cofactor.

It carries out the reaction cytidine + H2O + H(+) = uridine + NH4(+). It catalyses the reaction 2'-deoxycytidine + H2O + H(+) = 2'-deoxyuridine + NH4(+). In terms of biological role, this enzyme scavenges exogenous and endogenous cytidine and 2'-deoxycytidine for UMP synthesis. This Haemophilus influenzae (strain PittEE) protein is Cytidine deaminase.